The primary structure comprises 85 residues: NADH-ubiquinone oxidoreductase chain 4L (85 aa).

The next 2 membrane-spanning stretches (helical) occupy residues 21 to 41 and 51 to 71; these read LLVT…LLVY and FIFL…LVSL.

Belongs to the complex I subunit 4L family.

Its subcellular location is the mitochondrion membrane. The catalysed reaction is a ubiquinone + NADH + 5 H(+)(in) = a ubiquinol + NAD(+) + 4 H(+)(out). Functionally, core subunit of the mitochondrial membrane respiratory chain NADH dehydrogenase (Complex I) that is believed to belong to the minimal assembly required for catalysis. Complex I functions in the transfer of electrons from NADH to the respiratory chain. The immediate electron acceptor for the enzyme is believed to be ubiquinone. This chain is NADH-ubiquinone oxidoreductase chain 4L (ND4L), found in Artemia franciscana (Brine shrimp).